An 88-amino-acid chain; its full sequence is M-zodatoxin-Lt1a (88 aa).

The signal sequence occupies residues 1 to 22 (MKYFVVALALAVALVCIAESTA). Residues 23-62 (YDVNEELENELDDLSDAAWLAKAAEDLQALDDFEESEESR) constitute a propeptide that is removed on maturation. Residues 59-62 (EESR) carry the Processing quadruplet motif motif.

In terms of processing, cleavage of the propeptide depends on the processing quadruplet motif (XXXR, with at least one of X being E). Expressed by the venom gland.

The protein localises to the secreted. Its function is as follows. Has antimicrobial activity against Gram-positive bacteria (A.globiformis VKM Ac-1112 (MIC=0.5 uM), and B.subtilis VKM B-501 (MIC=1.0 uM)), Gram-negative bacteria (E.coli DH5-alpha (MIC=1.0 uM), E.coli MH1 (MIC=0.7 uM), and P.aeruginosa PAO1 (MIC=4.1 uM)), and yeasts (P.pastoris GS115 (MIC=17 uM), and S.cerevisiae Y190 (MIC&gt;33 uM)). Has a moderate hemolytic activity against rabbit erythrocytes. Causes paralysis, but is not lethal when injected into insect (M.domestica) larvae. This Lachesana tarabaevi (Spider) protein is M-zodatoxin-Lt1a.